We begin with the raw amino-acid sequence, 769 residues long: MSKMPAKKKSCFQITSVTTAQVATSITEDTESLDDPDESRTEDVSSEIFDVSRATDYGPEEVCERSSSEETLNNVGDAETPGTVSPNLILDGQLAAASAAPANGGGGGVSARSVAGALAQTLAAAAASVSTPGPSSATPSQPPATCSSRFRVIKLDHGSGEPYRRGRWTCMEYYERDSDSSVLTRSGDCIRHSNTLEQTAERDSGLGATGGSVVVVVASMQGAHGLDSGTDSSLTAVSQLPPSEKMSQPTLAQPQSFSVGQPQPPPPVGGAVAPSSASLPPFPGAATGPQPMTAAVQPTQLQGAVAGGALPGPVGQGLPPPPNVNLAQPVALAAQPGPAGGSSLSQQFAYPQPQIPPGHLLPMQPSGQSEYLPPHVALQPPSPAQPLSTSASATSASAASFPLGSGQSVSSLGAQMMGASAQPSEAVAPGPVPVGQAAPCQPAGVAPAALGGVVQPGSGLTGVGQPQPVQPPQQMGGSGQLPAVPGGPHTVVPGVPNVPAAVPVPSVPSVPTTSVTMPNVPAPLGQSQQLSSHTPVSRSSSVIQQVGSPLAQGTHSAPTSLPQSDLSQFQTQTQPLVGQVDDTRRKSEPLPQAPLSLIAESKPVVKPPVADALTNPLQLTPMNSLATSVFSIAIPVDGDEDRNPSTAFYQAFHLNTCQESKSLWDSASGGGVVAIDNKIEQAMDLVKSHLMYAVREEVEVLKEQIKELVERNSLLERENALLKSLSNNDQLSQLPAQQANPGSTSQQQAMIAQPPQPTQPPQQPNVSSA.

Disordered regions lie at residues 20–86 (AQVA…TVSP), 224–292 (HGLD…PQPM), 334–353 (AQPG…YPQP), and 520–563 (VPAP…SLPQ). Residues 28 to 37 (EDTESLDDPD) show a composition bias toward acidic residues. Positions 229–252 (GTDSSLTAVSQLPPSEKMSQPTLA) are enriched in polar residues. The span at 269-279 (GGAVAPSSASL) shows a compositional bias: low complexity. The span at 531–541 (SSHTPVSRSSS) shows a compositional bias: low complexity. Over residues 542 to 563 (VIQQVGSPLAQGTHSAPTSLPQ) the composition is skewed to polar residues. Residues 691–725 (MYAVREEVEVLKEQIKELVERNSLLERENALLKSL) adopt a coiled-coil conformation. Residues 726–745 (SNNDQLSQLPAQQANPGSTS) show a composition bias toward polar residues. The tract at residues 726–769 (SNNDQLSQLPAQQANPGSTSQQQAMIAQPPQPTQPPQQPNVSSA) is disordered. The span at 754-763 (PPQPTQPPQQ) shows a compositional bias: pro residues.

This sequence belongs to the TSC-22/Dip/Bun family. As to quaternary structure, interacts with NRBP1. Interacts with PKM isoform M2; the interaction results in reduced nuclear levels of PKM isoform M2, leading to repression of cyclin CCND1 transcription and reduced cell growth. Interacts with WDR77. As to expression, expressed in the cortex, medulla and papilla of the kidney. In terms of tissue distribution, expressed in the kidney.

Its function is as follows. Reduces the level of nuclear PKM isoform M2 which results in repression of cyclin CCND1 transcription and reduced cell growth. In terms of biological role, may protect kidney cells from hyperosmotic stress. In Mus musculus (Mouse), this protein is TSC22 domain family protein 2.